We begin with the raw amino-acid sequence, 318 residues long: Methionyl-tRNA formyltransferase (318 aa).

Residue 115–118 (SLLP) participates in (6S)-5,6,7,8-tetrahydrofolate binding.

It belongs to the Fmt family.

It catalyses the reaction L-methionyl-tRNA(fMet) + (6R)-10-formyltetrahydrofolate = N-formyl-L-methionyl-tRNA(fMet) + (6S)-5,6,7,8-tetrahydrofolate + H(+). Functionally, attaches a formyl group to the free amino group of methionyl-tRNA(fMet). The formyl group appears to play a dual role in the initiator identity of N-formylmethionyl-tRNA by promoting its recognition by IF2 and preventing the misappropriation of this tRNA by the elongation apparatus. This is Methionyl-tRNA formyltransferase from Deinococcus radiodurans (strain ATCC 13939 / DSM 20539 / JCM 16871 / CCUG 27074 / LMG 4051 / NBRC 15346 / NCIMB 9279 / VKM B-1422 / R1).